Consider the following 294-residue polypeptide: tRNA pseudouridine synthase B (294 aa).

The active-site Nucleophile is Asp38.

This sequence belongs to the pseudouridine synthase TruB family. Type 1 subfamily.

It carries out the reaction uridine(55) in tRNA = pseudouridine(55) in tRNA. In terms of biological role, responsible for synthesis of pseudouridine from uracil-55 in the psi GC loop of transfer RNAs. The protein is tRNA pseudouridine synthase B of Clostridium perfringens (strain SM101 / Type A).